The chain runs to 263 residues: MPEGPEIRRAADNLEAAIKGKPLTDVWFAFAQLKPYESQLTGQLVTRIETRGKALLTHFSNGLTLYSHNQLYGVWRVIDTGEIPQTTRILRVRLQTADKTILLYSASDIEMLTAEQLTTHPFLQRVGPDVLDARLTPEEVKARLLSPRFCNRQFSGLLLDQAFLAGLGNYLRVEILWQVGLTGQHKAKDLNEAQLNALSHALLDIPRLSYTTRGQADENKHHGALFRFKVFHRDGEACERCGGIIEKTTLSSRPFYWCPHCQK.

Pro2 functions as the Schiff-base intermediate with DNA in the catalytic mechanism. The Proton donor role is filled by Glu3. The active-site Proton donor; for beta-elimination activity is Lys53. Positions 70, 125, and 169 each coordinate DNA. An FPG-type zinc finger spans residues 229 to 263 (KVFHRDGEACERCGGIIEKTTLSSRPFYWCPHCQK). Arg253 functions as the Proton donor; for delta-elimination activity in the catalytic mechanism.

Belongs to the FPG family. Requires Zn(2+) as cofactor.

It catalyses the reaction 2'-deoxyribonucleotide-(2'-deoxyribose 5'-phosphate)-2'-deoxyribonucleotide-DNA = a 3'-end 2'-deoxyribonucleotide-(2,3-dehydro-2,3-deoxyribose 5'-phosphate)-DNA + a 5'-end 5'-phospho-2'-deoxyribonucleoside-DNA + H(+). Involved in base excision repair of DNA damaged by oxidation or by mutagenic agents. Acts as a DNA glycosylase that recognizes and removes damaged bases. Has a preference for oxidized pyrimidines, such as thymine glycol, 5,6-dihydrouracil and 5,6-dihydrothymine. Has AP (apurinic/apyrimidinic) lyase activity and introduces nicks in the DNA strand. Cleaves the DNA backbone by beta-delta elimination to generate a single-strand break at the site of the removed base with both 3'- and 5'-phosphates. The sequence is that of Endonuclease 8 from Salmonella paratyphi B (strain ATCC BAA-1250 / SPB7).